Reading from the N-terminus, the 432-residue chain is Mitochondrial distribution and morphology protein 12 (432 aa).

One can recognise an SMP-LTD domain in the interval Met1 to Ile432. Disordered regions lie at residues Trp182–Arg273 and Gln354–Gln377. Over residues Thr214 to Ser234 the composition is skewed to low complexity. Basic and acidic residues-rich tracts occupy residues Thr243–Asp253 and Gln355–Pro364.

The protein belongs to the MDM12 family. In terms of assembly, component of the ER-mitochondria encounter structure (ERMES) or MDM complex, composed of mmm1, mdm10, mdm12 and mdm34. A mmm1 homodimer associates with one molecule of mdm12 on each side in a pairwise head-to-tail manner, and the SMP-LTD domains of mmm1 and mdm12 generate a continuous hydrophobic tunnel for phospholipid trafficking.

Its subcellular location is the mitochondrion outer membrane. The protein localises to the endoplasmic reticulum membrane. Component of the ERMES/MDM complex, which serves as a molecular tether to connect the endoplasmic reticulum (ER) and mitochondria. Components of this complex are involved in the control of mitochondrial shape and protein biogenesis, and function in nonvesicular lipid trafficking between the ER and mitochondria. Mdm12 is required for the interaction of the ER-resident membrane protein MMM1 and the outer mitochondrial membrane-resident beta-barrel protein mdm10. The mdm12-mmm1 subcomplex functions in the major beta-barrel assembly pathway that is responsible for biogenesis of all mitochondrial outer membrane beta-barrel proteins, and acts in a late step after the SAM complex. The mdm10-mdm12-mmm1 subcomplex further acts in the TOM40-specific pathway after the action of the mdm12-mmm1 complex. Essential for establishing and maintaining the structure of mitochondria and maintenance of mtDNA nucleoids. In Aspergillus flavus (strain ATCC 200026 / FGSC A1120 / IAM 13836 / NRRL 3357 / JCM 12722 / SRRC 167), this protein is Mitochondrial distribution and morphology protein 12.